We begin with the raw amino-acid sequence, 63 residues long: uncharacterized protein (63 aa).

A signal peptide spans 1–21; sequence MNRALILTFVLFFALFAISSA.

This is an uncharacterized protein from Dictyostelium discoideum (Social amoeba).